The following is a 161-amino-acid chain: MSLIRRSNVFDPFSLDLWDPFDGFPFGSGSRSSGSIFPSFPRGTSSETAAFAGARIDWKETPEAHVFKADVPGLKKEEVKVEVEDGNVLQISGERSKEQEEKTDKWHRVERSSGKFLRRFRLPENTKPEQIKASMENGVLTVTVPKEEPKKPDVKSIQVTG.

The sHSP domain maps to 47–161; sequence ETAAFAGARI…PDVKSIQVTG (115 aa).

Belongs to the small heat shock protein (HSP20) family. In terms of assembly, may form oligomeric structures.

Its subcellular location is the cytoplasm. The sequence is that of 18.1 kDa class I heat shock protein (HSP18.1) from Oryza sativa subsp. japonica (Rice).